A 171-amino-acid chain; its full sequence is uncharacterized protein (171 aa).

This is an uncharacterized protein from Saccharomyces cerevisiae (strain ATCC 204508 / S288c) (Baker's yeast).